Reading from the N-terminus, the 721-residue chain is Translation initiation factor eIF2B subunit epsilon (721 aa).

Positions 1–13 (MAAPVVAPPGVVV) are enriched in low complexity. The segment at 1-40 (MAAPVVAPPGVVVSRANKRSGAGPGGSGGGGARGAEEEPP) is disordered. Ala2 is modified (N-acetylalanine). Arg19 carries the post-translational modification Omega-N-methylarginine. Residues 22–33 (AGPGGSGGGGAR) are compositionally biased toward gly residues. Phosphoserine is present on Ser27. Glycyl lysine isopeptide (Lys-Gly) (interchain with G-Cter in ubiquitin) cross-links involve residues Lys61 and Lys103. Phosphoserine is present on Ser130. Glycyl lysine isopeptide (Lys-Gly) (interchain with G-Cter in ubiquitin) cross-links involve residues Lys141 and Lys217. Position 322 is a phosphothreonine (Thr322). 2 disordered regions span residues 444-483 (PEGS…MKGY) and 523-547 (EESE…SPQM). Phosphoserine is present on residues Ser450, Ser466, Ser469, Ser532, and Ser540. Acidic residues-rich tracts occupy residues 456–471 (AEED…DSGA) and 523–537 (EESE…DSEE). Residues 543–720 (GSPQMDDIKV…KEAEEESSED (178 aa)) form the W2 domain. Position 544 is a phosphoserine; by DYRK2 (Ser544). A Phosphoserine modification is found at Ser717.

Belongs to the eIF-2B gamma/epsilon subunits family. Component of the translation initiation factor 2B (eIF2B) complex which is a heterodecamer of two sets of five different subunits: alpha, beta, gamma, delta and epsilon. Subunits alpha, beta and delta comprise a regulatory subcomplex and subunits epsilon and gamma comprise a catalytic subcomplex. Within the complex, the hexameric regulatory complex resides at the center, with the two heterodimeric catalytic subcomplexes bound on opposite sides. Post-translationally, phosphorylated at Ser-544 by DYRK2; this is required for subsequent phosphorylation by GSK3B. Phosphorylated on serine and threonine residues by GSK3B; phosphorylation inhibits its function. Polyubiquitinated, probably by NEDD4.

It localises to the cytoplasm. The protein resides in the cytosol. Its activity is regulated as follows. Activated by the chemical integrated stress response (ISR) inhibitor ISRIB which stimulates guanine nucleotide exchange factor activity for both phosphorylated and unphosphorylated eIF2. Acts as a component of the translation initiation factor 2B (eIF2B) complex, which catalyzes the exchange of GDP for GTP on eukaryotic initiation factor 2 (eIF2) gamma subunit. Its guanine nucleotide exchange factor activity is repressed when bound to eIF2 complex phosphorylated on the alpha subunit, thereby limiting the amount of methionyl-initiator methionine tRNA available to the ribosome and consequently global translation is repressed. The sequence is that of Translation initiation factor eIF2B subunit epsilon (EIF2B5) from Homo sapiens (Human).